A 440-amino-acid polypeptide reads, in one-letter code: tRNA-2-methylthio-N(6)-dimethylallyladenosine synthase (440 aa).

In terms of domain architecture, MTTase N-terminal spans 2-118; sequence PKYYIITYGC…LPKILESLDG (117 aa). Residues cysteine 11, cysteine 47, cysteine 81, cysteine 155, cysteine 159, and cysteine 162 each coordinate [4Fe-4S] cluster. The 230-residue stretch at 141–370 folds into the Radical SAM core domain; that stretch reads RENKFQAWIP…ENLQRKIIYE (230 aa). The region spanning 373 to 436 is the TRAM domain; sequence LSRVGKEEIV…LWSLKGEVIR (64 aa).

Belongs to the methylthiotransferase family. MiaB subfamily. In terms of assembly, monomer. Requires [4Fe-4S] cluster as cofactor.

The protein resides in the cytoplasm. The catalysed reaction is N(6)-dimethylallyladenosine(37) in tRNA + (sulfur carrier)-SH + AH2 + 2 S-adenosyl-L-methionine = 2-methylsulfanyl-N(6)-dimethylallyladenosine(37) in tRNA + (sulfur carrier)-H + 5'-deoxyadenosine + L-methionine + A + S-adenosyl-L-homocysteine + 2 H(+). In terms of biological role, catalyzes the methylthiolation of N6-(dimethylallyl)adenosine (i(6)A), leading to the formation of 2-methylthio-N6-(dimethylallyl)adenosine (ms(2)i(6)A) at position 37 in tRNAs that read codons beginning with uridine. This Dictyoglomus thermophilum (strain ATCC 35947 / DSM 3960 / H-6-12) protein is tRNA-2-methylthio-N(6)-dimethylallyladenosine synthase.